The sequence spans 624 residues: ADP,ATP carrier protein 1, chloroplastic (624 aa).

The transit peptide at 1–79 (MEAVIQTRGL…KERSTEFICK (79 aa)) directs the protein to the chloroplast. At alanine 80 the chain carries N-acetylalanine. 6 helical membrane passes run 108–128 (VEVA…CILF), 182–202 (ALFY…GFVM), 240–260 (LFYV…FWGF), 315–335 (AMMS…WWVN), 446–466 (LLTG…APLV), and 545–565 (LANS…AWLA). Residues 579–624 (SEEELEKEMERASSVKIPVVSQDESGNGSLGESPSSSPEKSAPTNL) are disordered. Positions 602–624 (ESGNGSLGESPSSSPEKSAPTNL) are enriched in low complexity.

This sequence belongs to the ADP/ATP translocase tlc (TC 2.A.12.2) family.

Its subcellular location is the plastid. The protein resides in the chloroplast membrane. Functionally, may function as an ATP importer. The chain is ADP,ATP carrier protein 1, chloroplastic (AATP1) from Arabidopsis thaliana (Mouse-ear cress).